The sequence spans 106 residues: Iron-sulfur cluster assembly protein CyaY (106 aa).

It belongs to the frataxin family.

In terms of biological role, involved in iron-sulfur (Fe-S) cluster assembly. May act as a regulator of Fe-S biogenesis. The protein is Iron-sulfur cluster assembly protein CyaY of Shigella flexneri.